A 381-amino-acid chain; its full sequence is Cytochrome P450 105C1 (381 aa).

Cysteine 330 is a binding site for heme.

This sequence belongs to the cytochrome P450 family. Heme is required as a cofactor.

It localises to the cytoplasm. This chain is Cytochrome P450 105C1 (cyp105C1), found in Streptomyces sp.